Reading from the N-terminus, the 138-residue chain is Small ribosomal subunit protein uS11c (138 aa).

The interval 1–22 (MAKPIPRIGSQRNRRINSRKNA) is disordered. Over residues 12-22 (RNRRINSRKNA) the composition is skewed to basic residues.

This sequence belongs to the universal ribosomal protein uS11 family. In terms of assembly, part of the 30S ribosomal subunit.

Its subcellular location is the plastid. It localises to the chloroplast. The sequence is that of Small ribosomal subunit protein uS11c from Fagopyrum esculentum subsp. ancestrale (Wild buckwheat).